A 726-amino-acid chain; its full sequence is Dipeptidyl-peptidase 5 (726 aa).

An N-terminal signal peptide occupies residues 1–19 (MAAAKWLIASLAFASSGLA). N-linked (GlcNAc...) asparagine glycosylation is found at N96 and N252. The segment at 269-291 (AEPINKRNGPRTPQGIEGASSSP) is disordered. The active-site Charge relay system is the S558. Residue N605 is glycosylated (N-linked (GlcNAc...) asparagine). Catalysis depends on charge relay system residues D641 and H673. An N-linked (GlcNAc...) asparagine glycan is attached at N699.

This sequence belongs to the peptidase S9C family.

The protein resides in the secreted. The polypeptide is Dipeptidyl-peptidase 5 (DPPV) (Arthroderma benhamiae (Trichophyton mentagrophytes)).